The chain runs to 88 residues: UPF0297 protein BcerKBAB4_4234 (88 aa).

The protein belongs to the UPF0297 family.

The chain is UPF0297 protein BcerKBAB4_4234 from Bacillus mycoides (strain KBAB4) (Bacillus weihenstephanensis).